The following is a 229-amino-acid chain: Nisin biosynthesis regulatory protein NisR (229 aa).

The Response regulatory domain maps to 4 to 117; that stretch reads KILIVDDDQE…QLVAKVEANI (114 aa). Asp-53 is subject to 4-aspartylphosphate. Positions 132–229 form a DNA-binding region, ompR/PhoB-type; it reads EIRRDLGPIT…VRGLGYQWHG (98 aa).

Phosphorylated by NisK.

Functionally, member of the two-component regulatory system NisK/NisR involved in the regulation of the biosynthesis of lantibiotic nisin. NisR may function as a regulatory protein. The protein is Nisin biosynthesis regulatory protein NisR (nisR) of Lactococcus lactis subsp. lactis (Streptococcus lactis).